Consider the following 320-residue polypeptide: Malate dehydrogenase (320 aa).

Residues 10-15 (GSGMIG) and D34 each bind NAD(+). Substrate is bound by residues R83 and R89. NAD(+) contacts are provided by residues N96 and 119 to 121 (ITN). Substrate-binding residues include N121 and R152. H176 serves as the catalytic Proton acceptor.

Belongs to the LDH/MDH superfamily. MDH type 3 family.

The catalysed reaction is (S)-malate + NAD(+) = oxaloacetate + NADH + H(+). Catalyzes the reversible oxidation of malate to oxaloacetate. The sequence is that of Malate dehydrogenase from Brucella anthropi (strain ATCC 49188 / DSM 6882 / CCUG 24695 / JCM 21032 / LMG 3331 / NBRC 15819 / NCTC 12168 / Alc 37) (Ochrobactrum anthropi).